Reading from the N-terminus, the 530-residue chain is Cation channel sperm-associated protein 2 (530 aa).

The Cytoplasmic segment spans residues 1–108 (MAAYQQEEQM…LWAGWVLECP (108 aa)). A helical membrane pass occupies residues 109 to 131 (LFKNFIIFLVFLNTIILMVEIEL). Over 132–140 (LESTNTKLW) the chain is Extracellular. A helical transmembrane segment spans residues 141–166 (PLKLTLEVAAWFILLIFILEILLKWL). The Cytoplasmic segment spans residues 167 to 175 (SNFSVFWKS). The helical transmembrane segment at 176–200 (AWNVFDFVVTMLSLLPEVVVLVGVT) threads the bilayer. At 201-203 (GQS) the chain is on the extracellular side. The helical transmembrane segment at 204 to 222 (VWLQLLRICRVLRSLKLLA) threads the bilayer. At 223–239 (QFRQIQIIILVLVRALK) the chain is on the cytoplasmic side. The chain crosses the membrane as a helical span at residues 240–262 (SMTFLLMLLLIFFYIFAVTGVYV). Residues 263-281 (FSEYTRSPRQDLEYHVFFS) are Extracellular-facing. The segment at residues 282–294 (DLPNSLVTVFILF) is an intramembrane region (helical; Pore-forming). Topologically, residues 295-314 (TLDHWYALLQDVWKVPEVSR) are extracellular. The helical transmembrane segment at 315–341 (IFSSIYFILWLLLGSIIFRSIIVAMMV) threads the bilayer. The Cytoplasmic segment spans residues 342–530 (TNFQNIRKEL…VQALMNLEDK (189 aa)). Residues 378-458 (MSHEALTSSH…TSSSYSSSSE (81 aa)) form a disordered region. Residues 429–440 (KTEETLSKKREY) show a composition bias toward basic and acidic residues. Residues 442 to 458 (SSSCVSSTSSSYSSSSE) are compositionally biased toward low complexity.

This sequence belongs to the cation channel sperm-associated (TC 1.A.1.19) family. As to quaternary structure, component of the CatSper complex or CatSpermasome composed of the core pore-forming members CATSPER1, CATSPER2, CATSPER3 and CATSPER4 as well as auxiliary members CATSPERB, CATSPERG, CATSPERD, CATSPERE, CATSPERZ, C2CD6/CATSPERT, TMEM249, TMEM262 and EFCAB9. HSPA1 may be an additional auxiliary complex member. The core complex members CATSPER1, CATSPER2, CATSPER3 and CATSPER4 form a heterotetrameric channel. The auxiliary CATSPERB, CATSPERG, CATSPERD and CATSPERE subunits form a pavilion-like structure over the pore which stabilizes the complex through interactions with CATSPER4, CATSPER3, CATSPER1 and CATSPER2 respectively. TMEM262/CATSPERH interacts with CATSPERB, further stabilizing the complex. C2CD6/CATSPERT interacts at least with CATSPERD and is required for targeting the CatSper complex in the flagellar membrane. Interacts with Ca(v)3.3/CACNA1I, leading to suppression of T-type calcium channel activity. In terms of tissue distribution, testis-specific.

The protein resides in the cell projection. It localises to the cilium. It is found in the flagellum membrane. The catalysed reaction is Ca(2+)(in) = Ca(2+)(out). With respect to regulation, the CatSper calcium channel is indirectly activated by extracellular progesterone and prostaglandins following the sequence: progesterone &gt; PGF1-alpha = PGE1 &gt; PGA1 &gt; PGE2 &gt;&gt; PGD2. The CatSper calcium channel is directly inhibited by endocannabinoid 2-arachidonoylglycerol (2AG). Indirect activation by progesterone takes place via the following mechanism: progesterone binds and activates the acylglycerol lipase ABHD2, which in turn mediates hydrolysis of 2AG inhibitor, relieving inhibition of the CatSper channel. The primary effect of progesterone activation is to shift voltage dependence towards more physiological, negative membrane potentials; it is not mediated by metabotropic receptors and second messengers. Sperm capacitation enhances the effect of progesterone by providing additional negative shift. Also activated by the elevation of intracellular pH. Pore-forming subunit of the CatSper complex, a sperm-specific voltage-gated calcium channel, that plays a central role in calcium-dependent physiological responses essential for successful fertilization, such as sperm hyperactivation, acrosome reaction and chemotaxis towards the oocyte. The sequence is that of Cation channel sperm-associated protein 2 (CATSPER2) from Homo sapiens (Human).